Here is a 386-residue protein sequence, read N- to C-terminus: GTPase Obg (386 aa).

The Obg domain occupies 1–159 (MKFVDEAKIK…RNLLLELLLL (159 aa)). Positions 160-333 (ADVGMLGLPN…LCRDVVEYLE (174 aa)) constitute an OBG-type G domain. Residues 166 to 173 (GLPNAGKS), 191 to 195 (FTTLV), 213 to 216 (DIPG), 283 to 286 (NKTD), and 314 to 316 (AAI) contribute to the GTP site. Mg(2+)-binding residues include Ser-173 and Thr-193.

The protein belongs to the TRAFAC class OBG-HflX-like GTPase superfamily. OBG GTPase family. Monomer. The cofactor is Mg(2+).

Its subcellular location is the cytoplasm. An essential GTPase which binds GTP, GDP and possibly (p)ppGpp with moderate affinity, with high nucleotide exchange rates and a fairly low GTP hydrolysis rate. Plays a role in control of the cell cycle, stress response, ribosome biogenesis and in those bacteria that undergo differentiation, in morphogenesis control. This is GTPase Obg from Psychromonas ingrahamii (strain DSM 17664 / CCUG 51855 / 37).